The following is a 465-amino-acid chain: Cysteine--tRNA ligase (465 aa).

Zn(2+) is bound at residue Cys27. Residues 29-39 (PTVYDDAHLGH) carry the 'HIGH' region motif. The tract at residues 153–173 (DISHKVSDDDTQSRVEHNSEK) is disordered. The Zn(2+) site is built by Cys208, His237, and Glu241. The 'KMSKS' region signature appears at 269–273 (KMSKS). Lys272 serves as a coordination point for ATP.

Belongs to the class-I aminoacyl-tRNA synthetase family. As to quaternary structure, monomer. It depends on Zn(2+) as a cofactor.

It localises to the cytoplasm. The enzyme catalyses tRNA(Cys) + L-cysteine + ATP = L-cysteinyl-tRNA(Cys) + AMP + diphosphate. The protein is Cysteine--tRNA ligase of Sulfurovum sp. (strain NBC37-1).